Here is a 316-residue protein sequence, read N- to C-terminus: tRNA-cytidine(32) 2-sulfurtransferase (316 aa).

The PP-loop motif signature appears at S58 to S63. [4Fe-4S] cluster is bound by residues C133, C136, and C224.

The protein belongs to the TtcA family. As to quaternary structure, homodimer. Mg(2+) is required as a cofactor. Requires [4Fe-4S] cluster as cofactor.

It localises to the cytoplasm. It catalyses the reaction cytidine(32) in tRNA + S-sulfanyl-L-cysteinyl-[cysteine desulfurase] + AH2 + ATP = 2-thiocytidine(32) in tRNA + L-cysteinyl-[cysteine desulfurase] + A + AMP + diphosphate + H(+). It participates in tRNA modification. Its function is as follows. Catalyzes the ATP-dependent 2-thiolation of cytidine in position 32 of tRNA, to form 2-thiocytidine (s(2)C32). The sulfur atoms are provided by the cysteine/cysteine desulfurase (IscS) system. This is tRNA-cytidine(32) 2-sulfurtransferase from Aromatoleum aromaticum (strain DSM 19018 / LMG 30748 / EbN1) (Azoarcus sp. (strain EbN1)).